Here is a 336-residue protein sequence, read N- to C-terminus: uncharacterized protein (336 aa).

Residues 162 to 195 form a disordered region; that stretch reads ARGLPVHSSFKQNNSSQTSSNKGTTTVAAGSGSD. The span at 169–187 shows a compositional bias: low complexity; that stretch reads SSFKQNNSSQTSSNKGTTT.

The protein belongs to the AHA1 family.

This is an uncharacterized protein from Schizosaccharomyces pombe (strain 972 / ATCC 24843) (Fission yeast).